We begin with the raw amino-acid sequence, 179 residues long: Adenine phosphoribosyltransferase (179 aa).

The protein belongs to the purine/pyrimidine phosphoribosyltransferase family. As to quaternary structure, homodimer.

It localises to the cytoplasm. It carries out the reaction AMP + diphosphate = 5-phospho-alpha-D-ribose 1-diphosphate + adenine. It participates in purine metabolism; AMP biosynthesis via salvage pathway; AMP from adenine: step 1/1. Its function is as follows. Catalyzes a salvage reaction resulting in the formation of AMP, that is energically less costly than de novo synthesis. The polypeptide is Adenine phosphoribosyltransferase (Bradyrhizobium sp. (strain BTAi1 / ATCC BAA-1182)).